The chain runs to 203 residues: FMN-dependent NADH:quinone oxidoreductase 5 (203 aa).

FMN-binding positions include S9, 15 to 17, 95 to 98, and 139 to 142; these read SAS, MYNF, and TSGG.

This sequence belongs to the azoreductase type 1 family. In terms of assembly, homodimer. Requires FMN as cofactor.

The catalysed reaction is 2 a quinone + NADH + H(+) = 2 a 1,4-benzosemiquinone + NAD(+). It carries out the reaction N,N-dimethyl-1,4-phenylenediamine + anthranilate + 2 NAD(+) = 2-(4-dimethylaminophenyl)diazenylbenzoate + 2 NADH + 2 H(+). Quinone reductase that provides resistance to thiol-specific stress caused by electrophilic quinones. In terms of biological role, also exhibits azoreductase activity. Catalyzes the reductive cleavage of the azo bond in aromatic azo compounds to the corresponding amines. This is FMN-dependent NADH:quinone oxidoreductase 5 from Pseudomonas fluorescens (strain ATCC BAA-477 / NRRL B-23932 / Pf-5).